The chain runs to 274 residues: Shikimate dehydrogenase (NADP(+)) (274 aa).

Shikimate-binding positions include 20-22 (SKS) and T68. Residue K72 is the Proton acceptor of the active site. D84 provides a ligand contact to NADP(+). Shikimate is bound by residues N93 and D109. NADP(+) is bound by residues 131 to 135 (GAGGA) and L217. A shikimate-binding site is contributed by Y219. G240 lines the NADP(+) pocket.

It belongs to the shikimate dehydrogenase family. In terms of assembly, homodimer.

It carries out the reaction shikimate + NADP(+) = 3-dehydroshikimate + NADPH + H(+). The protein operates within metabolic intermediate biosynthesis; chorismate biosynthesis; chorismate from D-erythrose 4-phosphate and phosphoenolpyruvate: step 4/7. Its function is as follows. Involved in the biosynthesis of the chorismate, which leads to the biosynthesis of aromatic amino acids. Catalyzes the reversible NADPH linked reduction of 3-dehydroshikimate (DHSA) to yield shikimate (SA). In Sphingopyxis alaskensis (strain DSM 13593 / LMG 18877 / RB2256) (Sphingomonas alaskensis), this protein is Shikimate dehydrogenase (NADP(+)).